The sequence spans 340 residues: Very-long-chain 3-oxoacyl-CoA reductase (340 aa).

A helical membrane pass occupies residues 23-43 (LQYTFAALGALYVLRGALSFV). The NADP(+) site is built by valine 68, arginine 109, aspartate 123, aspartate 131, asparagine 150, lysine 185, tyrosine 217, lysine 221, valine 250, and threonine 252. The Proton donor role is filled by tyrosine 217. Residue lysine 221 is the Lowers pKa of active site Tyr of the active site.

The protein belongs to the short-chain dehydrogenases/reductases (SDR) family.

It is found in the endoplasmic reticulum membrane. It catalyses the reaction a very-long-chain (3R)-3-hydroxyacyl-CoA + NADP(+) = a very-long-chain 3-oxoacyl-CoA + NADPH + H(+). It participates in lipid metabolism; fatty acid biosynthesis. In terms of biological role, component of the microsomal membrane bound fatty acid elongation system, which produces the 26-carbon very long-chain fatty acids (VLCFA) from palmitate. Catalyzes the reduction of the 3-ketoacyl-CoA intermediate that is formed in each cycle of fatty acid elongation. VLCFAs serve as precursors for ceramide and sphingolipids. The protein is Very-long-chain 3-oxoacyl-CoA reductase of Podospora anserina (strain S / ATCC MYA-4624 / DSM 980 / FGSC 10383) (Pleurage anserina).